A 1081-amino-acid chain; its full sequence is Inversin (1081 aa).

ANK repeat units lie at residues 13–42 (SLASQVHAAAINGDKGALHRLIIGNSALKD), 47–76 (FGRTPLMYCVLADRLDCADALLKAGADVNK), 80–110 (SQRTALHLAAQKGNYRFMKLLLTRRANWMQK), 113–144 (EEMTPLHLATRHKSPKCLALLLKFMAPGEVDT), 148–177 (NKQTALHWSAYYNNPEHVKLLIKHDSNIGI), 181–213 (EGKIPLHWAANHKDPSAVHTVRCILDAAPTESL), 220–250 (EGRTPLHFAVADGNVTVVDVLTSYESCNITS), 254–283 (LFRTPLHWAALLGHAQIVHLLLERNKSGTI), 288–317 (QGATPLHYAAQSNFAETVKVFLKHPSVKDD), 321–350 (EGRTSFMWAAGKGSDDVLRTMLSLKSDIDI), 356–385 (YGGTALHAAALSGHVSTVKLLLENNAQVDA), 389–418 (MKHTPLFRACEMGHKDVIQTLIKGGARVDL), 422–451 (DGHSLLHWAALGGNADVCQILIENKINPNV), 455–484 (AGRTPLQCAAYGGYINCMAVLMENNADPNI), 488–517 (EGRTALHWSCNNGYLDAIKLLLDFAAFPNQ), and 523–553 (ERYTPLDYALLGERHEVIQFMLEHGALSIAA). Residue Asn75 is modified to 3-hydroxyasparagine. The D-box 1 motif lies at 490 to 498 (RTALHWSCN). Residues 555–584 (QDIAAFKIQAVYKGYKVRKAFRDRKNLLMK) enclose the IQ 1 domain. Over residues 589–610 (RKDAAAKKREEENKRREAEQQK) the composition is skewed to basic and acidic residues. The interval 589 to 889 (RKDAAAKKRE…PAPGPLSGQS (301 aa)) is disordered. Residues 638–649 (RAPSKQPPSSEA) are compositionally biased toward polar residues. Composition is skewed to basic and acidic residues over residues 688–698 (KPNESPREQCK), 724–740 (EKSRSETGGEQRCDKGK), and 772–785 (DGHRKPSRRQDTAS). Positions 863–872 (SGTSTLSEDA) are enriched in polar residues. Positions 910–918 (RKELFRKKN) match the D-box 2 motif. An IQ 2 domain is found at 917 to 946 (KNKAAAVIQRAWRSYQLRKHLSHLLHMKEL). Residues 1022 to 1050 (RTHSVLHLNSVSNLQCIHLLENSGRSKNF) form an ANK 17 repeat. The segment covering 1051-1061 (SYNLQSATPPK) has biased composition (polar residues). Residues 1051 to 1081 (SYNLQSATPPKTKTKLRPSLEEECVRGSWNS) are disordered.

As to quaternary structure, binds calmodulin via its IQ domains. Interacts with APC2. Interacts with alpha-, beta-, and gamma-catenin. Interacts with N-cadherin (CDH2). Interacts with NPHP1. Interacts with DVL1, PRICKLE (PRICKLE1 or PRICKLE2) and Strabismus (VANGL1 or VANGL2). Component of a complex containing at least ANKS6, INVS, NEK8 and NPHP3. ANKS6 may organize complex assembly by linking INVS and NPHP3 to NEK8 and INVS may target the complex to the proximal ciliary axoneme. Interacts with IQCB1; the interaction likely requires additional interactors. Interacts with microtubules. Post-translationally, may be ubiquitinated via its interaction with APC2. Hydroxylated at Asn-75, most probably by HIF1AN.

The protein localises to the cytoplasm. The protein resides in the cytoskeleton. Its subcellular location is the membrane. It is found in the spindle. It localises to the nucleus. In terms of biological role, required for normal renal development and establishment of left-right axis. Probably acts as a molecular switch between different Wnt signaling pathways. Inhibits the canonical Wnt pathway by targeting cytoplasmic disheveled (DVL1) for degradation by the ubiquitin-proteasome. This suggests that it is required in renal development to oppose the repression of terminal differentiation of tubular epithelial cells by Wnt signaling. Involved in the organization of apical junctions in kidney cells together with NPHP1, NPHP4 and RPGRIP1L/NPHP8. Does not seem to be strictly required for ciliogenesis. The sequence is that of Inversin (INVS) from Canis lupus familiaris (Dog).